The primary structure comprises 48 residues: MLGRTKLGNRNAQANNNAKKKNGFQTHFDSYAGREAEKLIASNKRHND.

Residues 1–30 (MLGRTKLGNRNAQANNNAKKKNGFQTHFDS) form a disordered region.

This is an uncharacterized protein from Bacillus subtilis (strain 168).